The sequence spans 240 residues: Glutathione-independent glyoxalase hsp3102 (240 aa).

Residues Cys-141, His-142, and Glu-175 contribute to the active site.

Belongs to the peptidase C56 family. HSP31-like subfamily.

It localises to the cytoplasm. It is found in the nucleus. The catalysed reaction is methylglyoxal + H2O = (R)-lactate + H(+). In terms of biological role, catalyzes the conversion of methylglyoxal (MG) to D-lactate in a single glutathione (GSH)-independent step. May play a role in detoxifying endogenously produced glyoxals. Involved in protection against reactive oxygen species (ROS). The chain is Glutathione-independent glyoxalase hsp3102 from Schizosaccharomyces pombe (strain 972 / ATCC 24843) (Fission yeast).